A 401-amino-acid polypeptide reads, in one-letter code: Na(+)/H(+) antiporter NhaA 2 (401 aa).

The next 11 membrane-spanning stretches (helical) occupy residues 13 to 33 (AAGGVLLVIAAAIAMVLANSP), 59 to 79 (LLLWVNDGLMAIFFFLVGLEV), 94 to 114 (ITLPAVAAIAGIVFPALIYVW), 125 to 145 (GWAIPSATDIAFAVGVFTIFG), 154 to 174 (LFLLSVAIFDDIGAIVIIALF), 178 to 198 (DLSTTSLIVACAGFVALFLLN), 209 to 229 (VLIGVVVWAAVLKSGVHATLA), 260 to 280 (WVGFVVLPIFAFANAGVSLFG), 292 to 312 (LGIAVGLFVGKQLGIFGVCWI), 332 to 352 (GVSLLCGIGFTMSLFIGSLAF), and 363 to 383 (VKAGVLLGSLVSAVLGAVLLA).

The protein belongs to the NhaA Na(+)/H(+) (TC 2.A.33) antiporter family.

It localises to the cell inner membrane. The enzyme catalyses Na(+)(in) + 2 H(+)(out) = Na(+)(out) + 2 H(+)(in). Na(+)/H(+) antiporter that extrudes sodium in exchange for external protons. This chain is Na(+)/H(+) antiporter NhaA 2, found in Pseudoalteromonas atlantica (strain T6c / ATCC BAA-1087).